Reading from the N-terminus, the 775-residue chain is DNA polymerase (775 aa).

This sequence belongs to the DNA polymerase type-B family. Monomer.

It catalyses the reaction DNA(n) + a 2'-deoxyribonucleoside 5'-triphosphate = DNA(n+1) + diphosphate. With respect to regulation, an 11-mer corresponding to the PIP-box of RfcL inhibits DNA synthesis. In terms of biological role, in addition to polymerase activity, this DNA polymerase exhibits 3' to 5' exonuclease activity. The chain is DNA polymerase (pol) from Pyrococcus furiosus (strain ATCC 43587 / DSM 3638 / JCM 8422 / Vc1).